Reading from the N-terminus, the 363-residue chain is Spermidine/putrescine import ATP-binding protein PotA (363 aa).

The ABC transporter domain occupies 4–234 (LELRNVIRRF…PANRFIADFI (231 aa)). 36–43 (GPSGCGKT) lines the ATP pocket.

The protein belongs to the ABC transporter superfamily. Spermidine/putrescine importer (TC 3.A.1.11.1) family. The complex is composed of two ATP-binding proteins (PotA), two transmembrane proteins (PotB and PotC) and a solute-binding protein (PotD).

The protein resides in the cell inner membrane. It catalyses the reaction ATP + H2O + polyamine-[polyamine-binding protein]Side 1 = ADP + phosphate + polyamineSide 2 + [polyamine-binding protein]Side 1.. In terms of biological role, part of the ABC transporter complex PotABCD involved in spermidine/putrescine import. Responsible for energy coupling to the transport system. In Nitrosomonas eutropha (strain DSM 101675 / C91 / Nm57), this protein is Spermidine/putrescine import ATP-binding protein PotA.